We begin with the raw amino-acid sequence, 193 residues long: MAQSDITIDALDKVGRQDAEYLVSLVRSIPGFPKEGIIFRDFIPVFADPKGLRILLEALEAALPVPASEFDSIAGLESRGFLFGPALAARMGKGFIAVRKAGKLPPETIGESYDLEYGSARVEIETDAVQAGERVLIVDDLIATGGTAKAATDLIDKVGGTVAGYGFVMRLEGLDGIDKLGGKPVSSLMAMPA.

This sequence belongs to the purine/pyrimidine phosphoribosyltransferase family. In terms of assembly, homodimer.

Its subcellular location is the cytoplasm. The catalysed reaction is AMP + diphosphate = 5-phospho-alpha-D-ribose 1-diphosphate + adenine. Its pathway is purine metabolism; AMP biosynthesis via salvage pathway; AMP from adenine: step 1/1. Functionally, catalyzes a salvage reaction resulting in the formation of AMP, that is energically less costly than de novo synthesis. This Bifidobacterium longum subsp. infantis (strain ATCC 15697 / DSM 20088 / JCM 1222 / NCTC 11817 / S12) protein is Adenine phosphoribosyltransferase.